The primary structure comprises 57 residues: Large ribosomal subunit protein bL32 (57 aa).

This sequence belongs to the bacterial ribosomal protein bL32 family.

This Bacillus anthracis (strain A0248) protein is Large ribosomal subunit protein bL32.